A 135-amino-acid chain; its full sequence is Prostate and breast cancer overexpressed gene 1 protein (135 aa).

Expressed in colon, prostate, small intestine, testis and spleen, with lower expression in thymus, ovary, and peripheral blood leukocytes. Up-regulated expression in prostate, breast, and bladder cancer, but not in lung and colon cancer.

The protein localises to the cytoplasm. It localises to the nucleus. The sequence is that of Prostate and breast cancer overexpressed gene 1 protein (PBOV1) from Homo sapiens (Human).